We begin with the raw amino-acid sequence, 264 residues long: 3-methyl-2-oxobutanoate hydroxymethyltransferase (264 aa).

Residues Asp-45 and Asp-84 each coordinate Mg(2+). 3-methyl-2-oxobutanoate contacts are provided by residues 45-46, Asp-84, and Lys-112; that span reads DS. Glu-114 contacts Mg(2+). The Proton acceptor role is filled by Glu-181.

It belongs to the PanB family. In terms of assembly, homodecamer; pentamer of dimers. The cofactor is Mg(2+).

It localises to the cytoplasm. The enzyme catalyses 3-methyl-2-oxobutanoate + (6R)-5,10-methylene-5,6,7,8-tetrahydrofolate + H2O = 2-dehydropantoate + (6S)-5,6,7,8-tetrahydrofolate. It functions in the pathway cofactor biosynthesis; (R)-pantothenate biosynthesis; (R)-pantoate from 3-methyl-2-oxobutanoate: step 1/2. In terms of biological role, catalyzes the reversible reaction in which hydroxymethyl group from 5,10-methylenetetrahydrofolate is transferred onto alpha-ketoisovalerate to form ketopantoate. In Escherichia coli (strain 55989 / EAEC), this protein is 3-methyl-2-oxobutanoate hydroxymethyltransferase.